The sequence spans 23 residues: Coenzyme PQQ synthesis protein A (23 aa).

Residues 15 to 19 constitute a cross-link (pyrroloquinoline quinone (Glu-Tyr)); sequence EVTLY.

It belongs to the PqqA family.

It functions in the pathway cofactor biosynthesis; pyrroloquinoline quinone biosynthesis. Its function is as follows. Required for coenzyme pyrroloquinoline quinone (PQQ) biosynthesis. PQQ is probably formed by cross-linking a specific glutamate to a specific tyrosine residue and excising these residues from the peptide. In Klebsiella pneumoniae (strain 342), this protein is Coenzyme PQQ synthesis protein A.